We begin with the raw amino-acid sequence, 96 residues long: Glutamyl-tRNA(Gln) amidotransferase subunit C (96 aa).

The protein belongs to the GatC family. As to quaternary structure, heterotrimer of A, B and C subunits.

It carries out the reaction L-glutamyl-tRNA(Gln) + L-glutamine + ATP + H2O = L-glutaminyl-tRNA(Gln) + L-glutamate + ADP + phosphate + H(+). The enzyme catalyses L-aspartyl-tRNA(Asn) + L-glutamine + ATP + H2O = L-asparaginyl-tRNA(Asn) + L-glutamate + ADP + phosphate + 2 H(+). In terms of biological role, allows the formation of correctly charged Asn-tRNA(Asn) or Gln-tRNA(Gln) through the transamidation of misacylated Asp-tRNA(Asn) or Glu-tRNA(Gln) in organisms which lack either or both of asparaginyl-tRNA or glutaminyl-tRNA synthetases. The reaction takes place in the presence of glutamine and ATP through an activated phospho-Asp-tRNA(Asn) or phospho-Glu-tRNA(Gln). This is Glutamyl-tRNA(Gln) amidotransferase subunit C from Deinococcus radiodurans (strain ATCC 13939 / DSM 20539 / JCM 16871 / CCUG 27074 / LMG 4051 / NBRC 15346 / NCIMB 9279 / VKM B-1422 / R1).